We begin with the raw amino-acid sequence, 268 residues long: Sterol uptake protein 2 (268 aa).

This sequence belongs to the SUT1 family.

It is found in the nucleus. Its function is as follows. Putative transcription factor involved in the regulation of the activity of the cAMP/protein kinase A pathway. Involved in sterol uptake. With SUT1, positively regulates mating by repressing the expression of the mating inhibitors NCE102, PRR2 and RHO5 in response to pheromone. The chain is Sterol uptake protein 2 from Saccharomyces cerevisiae (strain ATCC 204508 / S288c) (Baker's yeast).